Here is a 155-residue protein sequence, read N- to C-terminus: Ubiquinone biosynthesis protein COQ4 homolog, mitochondrial (155 aa).

The protein belongs to the COQ4 family. As to quaternary structure, component of a multi-subunit COQ enzyme complex. Requires Zn(2+) as cofactor.

It is found in the mitochondrion inner membrane. It catalyses the reaction a 4-hydroxy-3-methoxy-5-(all-trans-polyprenyl)benzoate + H(+) = a 2-methoxy-6-(all-trans-polyprenyl)phenol + CO2. It participates in cofactor biosynthesis; ubiquinone biosynthesis. In terms of biological role, lyase that catalyzes the C1-decarboxylation of 4-hydroxy-3-methoxy-5-(all-trans-polyprenyl)benzoic acid into 2-methoxy-6-(all-trans-polyprenyl)phenol during ubiquinone biosynthesis. This chain is Ubiquinone biosynthesis protein COQ4 homolog, mitochondrial, found in Cryptosporidium hominis.